Reading from the N-terminus, the 662-residue chain is Forkhead box protein O1 (662 aa).

2 disordered regions span residues 1–62 and 122–165; these read MAEA…PSAS and GCLH…SRRN. Threonine 24 carries the post-translational modification Phosphothreonine; by PKB/AKT1 or PKB/AKT2 and SGK1. The span at 33-62 shows a compositional bias: low complexity; it reads SQSNSATSSPAPSGGAAANPDAAAGLPSAS. Residues 126-146 show a composition bias toward pro residues; it reads PAPPQQPPPPGPLSQHPPVPP. Positions 167 to 261 form a DNA-binding region, fork-head; it reads WGNLSYADLI…KSGKSPRRRA (95 aa). DNA-binding stretches follow at residues 218 to 225 and 241 to 244; these read NSIRHNLS and SSWW. Serine 219 carries the phosphoserine; by STK4/MST1 modification. Phosphoserine occurs at positions 225, 241, and 242. Residues 241–342 form a disordered region; that stretch reads SSWWMLNPEG…GRLSPIMTEQ (102 aa). N6-acetyllysine occurs at positions 252 and 255. Serine 256 bears the Phosphoserine; by CDK1 mark. An omega-N-methylarginine; by PRMT1 mark is found at arginine 258 and arginine 260. The Nuclear localization signal signature appears at 258-260; sequence RRR. Serine 263 carries the post-translational modification Phosphoserine; by PKB/AKT1 and SGK1. N6-acetyllysine is present on residues lysine 269, lysine 272, and lysine 281. The segment covering 271-282 has biased composition (basic residues); that stretch reads AKSRGRAAKKKA. The tract at residues 290–570 is sufficient for interaction with NLK; sequence GAGDSPGSQF…RLTQEKTALQ (281 aa). Phosphoserine occurs at positions 294 and 305. Positions 316 to 333 are enriched in polar residues; sequence NWSTFRPRTSSNASTISG. Serine 326 is subject to Phosphoserine; by PKB/AKT1. Serine 329 carries the post-translational modification Phosphoserine; by CK1 and SGK1. Position 332 is a phosphoserine; by CK1 (serine 332). Serine 336 bears the Phosphoserine; by DYRK1A mark. Threonine 340 is modified (phosphothreonine). Residues 370 to 466 form a required for interaction with RUNX2 region; the sequence is SEISNPENME…GGMAQYNCAA (97 aa). Position 430 is an N6-acetyllysine (lysine 430). Positions 469-473 match the Required for interaction with SIRT1 motif; that stretch reads LKELL.

In terms of assembly, interacts with LRPPRC. Interacts with RUNX2; the interaction inhibits RUNX2 transcriptional activity and mediates the IGF1/insulin-dependent BGLAP expression in osteoblasts Interacts with PPP2R1A; the interaction regulates the dephosphorylation of FOXO1 at Thr-24 and Ser-263 leading to its nuclear import. Interacts with NLK. Interacts with SIRT1; the interaction results in the deacetylation of FOXO1 leading to activation of FOXO1-mediated transcription of genes involved in DNA repair and stress resistance. Binds to CDK1. Interacts with the 14-3-3 proteins, YWHAG and YWHAZ; the interactions require insulin-stimulated phosphorylation on Thr-24, promote nuclear exit and loss of transcriptional activity. Interacts with SKP2; the interaction ubiquitinates FOXO1 leading to its proteasomal degradation. The interaction requires the presence of KRIT1. Interacts (via the C-terminal half) with ATF4 (via its DNA binding domain); the interaction occurs in osteoblasts, regulates glucose homeostasis via suppression of beta-cell proliferation and subsequent decrease in insulin production. Interacts with PRMT1; the interaction methylates FOXO1, prevents PKB/AKT1 phosphorylation and retains FOXO1 in the nucleus. Interacts with EP300 and CREBBP; the interactions acetylate FOXO1. Interacts with SIRT2; the interaction is disrupted in response to oxidative stress or serum deprivation, leading to increased level of acetylated FOXO1, which promotes stress-induced autophagy by stimulating E1-like activating enzyme ATG7. Interacts (acetylated form) with ATG7; the interaction is increased in response to oxidative stress or serum deprivation and promotes the autophagic process leading to cell death. Interacts (acetylated form) with PPARG. Interacts with XBP1; this interaction is direct and leads to FOXO1 ubiquitination and degradation via the proteasome pathway. Interacts (via the Fork-head domain) with CEBPA; the interaction increases when FOXO1 is deacetylated. Interacts with WDFY2. Forms a complex with WDFY2 and AKT1. Interacts with CRY1. Interacts with PPIA/CYPA; the interaction promotes FOXO1 dephosphorylation, nuclear accumulation and transcriptional activity. Interacts with TOX4; FOXO1 is required for full induction of TOX4-dependent activity and the interaction is inhibited by insulin. Interacts (when phosphorylated on Ser-263) with STUB1/CHIP. Post-translationally, phosphorylation by NLK promotes nuclear export and inhibits the transcriptional activity. In response to growth factors, phosphorylation on Thr-24, Ser-263 and Ser-326 by PKB/AKT1 promotes nuclear export and inactivation of transactivational activity. Phosphorylation on Thr-24 is required for binding 14-3-3 proteins. Phosphorylation of Ser-263 decreases DNA-binding activity and promotes the phosphorylation of Thr-24 and Ser-326, permitting phosphorylation of Ser-329 and Ser-332, probably by CDK1, leading to nuclear exclusion and loss of function. Stress signals, such as response to oxygen or nitric oxide, attenuate the PKB/AKT1-mediated phosphorylation leading to nuclear retention. Phosphorylation of Ser-336 is independent of IGF1 and leads to reduced function. Dephosphorylated on Thr-24 and Ser-263 by PP2A in beta-cells under oxidative stress leading to nuclear retention. Phosphorylation of Ser-256 by CDK1 disrupts binding of 14-3-3 proteins leading to nuclear accumulation and has no effect on DNA binding nor transcriptional activity. Phosphorylation by STK4/MST1 on Ser-219, upon oxidative stress, inhibits binding to 14-3-3 proteins and nuclear export. PPIA/CYPA promotes its dephosphorylation on Ser-263. Ubiquitinated by SKP2. Ubiquitination leads to proteasomal degradation. Ubiquitinated by STUB1/CHIP; when Ser-263 is phosphorylated. In terms of processing, methylation inhibits AKT1-mediated phosphorylation at Ser-263 and is increased by oxidative stress. Post-translationally, acetylated. Acetylation at Lys-269 and Lys-281 are necessary for autophagic cell death induction. Deacetylated by SIRT2 in response to oxidative stress or serum deprivation, thereby negatively regulating FOXO1-mediated autophagic cell death. Once in the nucleus, acetylated by CREBBP/EP300. Acetylation diminishes the interaction with target DNA and attenuates the transcriptional activity. It increases the phosphorylation at Ser-263. Deacetylation by SIRT1 results in reactivation of the transcriptional activity. Oxidative stress by hydrogen peroxide treatment appears to promote deacetylation and uncoupling of insulin-induced phosphorylation. By contrast, resveratrol acts independently of acetylation. Acetylated at Lys-430, promoting its localization to the nucleus and transcription factor activity. Deacetylation at Lys-430 by SIRT6, promotes its translocation into the cytoplasm, preventing its transcription factor activity. Deacetylation and subsequent inhibition by SIRT6 has different effects depending on cell types: it inhibits gluconeogenesis in hepatocytes, promotes glucose sensing in pancreatic beta-cells and regulates lipid catabolism in brown adipocytes. Highly in subcutaneous adipose and visceral adipose tissues. Levels higher in piglets than in adults. Also expressed at lower levels in liver and muscle.

Its subcellular location is the cytoplasm. The protein localises to the nucleus. In terms of biological role, transcription factor that is the main target of insulin signaling and regulates metabolic homeostasis in response to oxidative stress. Binds to the insulin response element (IRE) with consensus sequence 5'-TT[G/A]TTTTG-3' and the related Daf-16 family binding element (DBE) with consensus sequence 5'-TT[G/A]TTTAC-3'. Activity suppressed by insulin. Main regulator of redox balance and osteoblast numbers and controls bone mass. Orchestrates the endocrine function of the skeleton in regulating glucose metabolism. Also acts as a key regulator of chondrogenic commitment of skeletal progenitor cells in response to lipid availability: when lipids levels are low, translocates to the nucleus and promotes expression of SOX9, which induces chondrogenic commitment and suppresses fatty acid oxidation. Acts synergistically with ATF4 to suppress osteocalcin/BGLAP activity, increasing glucose levels and triggering glucose intolerance and insulin insensitivity. Also suppresses the transcriptional activity of RUNX2, an upstream activator of osteocalcin/BGLAP. Acts as an inhibitor of glucose sensing in pancreatic beta cells by acting as a transcription repressor and suppressing expression of PDX1. In hepatocytes, promotes gluconeogenesis by acting together with PPARGC1A and CEBPA to activate the expression of genes such as IGFBP1, G6PC1 and PCK1. Also promotes gluconeogenesis by directly promoting expression of PPARGC1A and G6PC1. Important regulator of cell death acting downstream of CDK1, PKB/AKT1 and STK4/MST1. Promotes neural cell death. Mediates insulin action on adipose tissue. Regulates the expression of adipogenic genes such as PPARG during preadipocyte differentiation and, adipocyte size and adipose tissue-specific gene expression in response to excessive calorie intake. Regulates the transcriptional activity of GADD45A and repair of nitric oxide-damaged DNA in beta-cells. Required for the autophagic cell death induction in response to starvation or oxidative stress in a transcription-independent manner. Mediates the function of MLIP in cardiomyocytes hypertrophy and cardiac remodeling. Positive regulator of apoptosis in cardiac smooth muscle cells as a result of its transcriptional activation of pro-apoptotic genes. Regulates endothelial cell (EC) viability and apoptosis in a PPIA/CYPA-dependent manner via transcription of CCL2 and BCL2L11 which are involved in EC chemotaxis and apoptosis. In Sus scrofa (Pig), this protein is Forkhead box protein O1 (FOXO1).